A 457-amino-acid polypeptide reads, in one-letter code: Acetylcholine receptor subunit alpha-1-A (457 aa).

A signal peptide spans 1-20; sequence MDFVLTRLILLFLAATIIYS. Topologically, residues 21–230 are extracellular; sequence SEDESRLIND…ITYHFLLQRL (210 aa). Intrachain disulfides connect Cys-148/Cys-162 and Cys-212/Cys-213. Residue Asn-161 is glycosylated (N-linked (GlcNAc...) asparagine). 3 consecutive transmembrane segments (helical) span residues 231–255, 263–281, and 297–316; these read PLYF…VFYL, ITLS…LVIV, and YMLF…VIVI. At 317–428 the chain is on the cytoplasmic side; it reads NTHHRSPSTH…WKFVAMVLDH (112 aa). Residues 429 to 447 form a helical membrane-spanning segment; the sequence is LLLAVFMIVCIIGTLAIFA.

It belongs to the ligand-gated ion channel (TC 1.A.9) family. Acetylcholine receptor (TC 1.A.9.1) subfamily. Alpha-1/CHRNA1 sub-subfamily. One of the alpha chains that assemble within the acetylcholine receptor, a pentamer of two alpha chains, a beta, a delta, and a gamma or epsilon chains. As to expression, oocytes.

The protein localises to the postsynaptic cell membrane. Its subcellular location is the cell membrane. It carries out the reaction K(+)(in) = K(+)(out). The enzyme catalyses Na(+)(in) = Na(+)(out). Functionally, upon acetylcholine binding, the AChR responds by an extensive change in conformation that affects all subunits and leads to opening of an ion-conducting channel across the plasma membrane. The protein is Acetylcholine receptor subunit alpha-1-A (chrna1-a) of Xenopus laevis (African clawed frog).